Consider the following 464-residue polypeptide: tRNA modification GTPase MnmE (464 aa).

The (6S)-5-formyl-5,6,7,8-tetrahydrofolate site is built by Arg27, Glu90, and Lys129. The region spanning 222–384 (GVALVLAGSV…LYDKIRALIS (163 aa)) is the TrmE-type G domain. Residues 232-237 (NAGKSS), 251-257 (SSYPGTT), and 276-279 (DTAG) each bind GTP. Mg(2+) contacts are provided by Ser236 and Thr257. Lys464 provides a ligand contact to (6S)-5-formyl-5,6,7,8-tetrahydrofolate.

Belongs to the TRAFAC class TrmE-Era-EngA-EngB-Septin-like GTPase superfamily. TrmE GTPase family. As to quaternary structure, homodimer. Heterotetramer of two MnmE and two MnmG subunits. K(+) is required as a cofactor.

It is found in the cytoplasm. Functionally, exhibits a very high intrinsic GTPase hydrolysis rate. Involved in the addition of a carboxymethylaminomethyl (cmnm) group at the wobble position (U34) of certain tRNAs, forming tRNA-cmnm(5)s(2)U34. The polypeptide is tRNA modification GTPase MnmE (Borreliella burgdorferi (strain ATCC 35210 / DSM 4680 / CIP 102532 / B31) (Borrelia burgdorferi)).